Reading from the N-terminus, the 723-residue chain is Capsid protein (723 aa).

Positions 658–679 are disordered; sequence QATPPPFKKPRTEDQEENPEET.

This sequence belongs to the anelloviridae capsid protein family.

Its subcellular location is the virion. Its function is as follows. Self assemble to form an icosahedral capsid. The chain is Capsid protein from Torque teno virus (isolate Japanese macaque/Japan/Mf-TTV9/2000) (TTV).